We begin with the raw amino-acid sequence, 211 residues long: Mediator-associated protein 2 (211 aa).

The tract at residues 128 to 211 is disordered; that stretch reads QQKLVGSVTN…KSKKKVKKEE (84 aa). Residues 134–148 show a composition bias toward low complexity; it reads SVTNSSKKSSNLTQS. At S173 the chain carries Phosphoserine. Positions 189 to 198 are enriched in low complexity; the sequence is STSTVSGSSE. The segment covering 202-211 has biased composition (basic residues); it reads KSKKKVKKEE.

Associated with the Mediator complex.

The protein resides in the nucleus. The protein is Mediator-associated protein 2 of Arabidopsis thaliana (Mouse-ear cress).